The chain runs to 136 residues: Protein NrdI (136 aa).

Belongs to the NrdI family.

Its function is as follows. Probably involved in ribonucleotide reductase function. The chain is Protein NrdI from Klebsiella pneumoniae subsp. pneumoniae (strain ATCC 700721 / MGH 78578).